Here is a 326-residue protein sequence, read N- to C-terminus: Transcription factor WRKY45-1 (326 aa).

Disordered regions lie at residues G67 to V114 and G252 to D288. Residues V112–P180 constitute a DNA-binding region (WRKY). Residues R273 to G283 are compositionally biased toward gly residues.

Belongs to the WRKY group III family. Expressed in aleurone cells.

The protein resides in the nucleus. Functionally, transcriptional activator involved in defense responses against pathogens. Acts as a positive regulator of defense responses against the rice blast fungus Magnaporthe oryzae. Acts through W-boxes, which are cis-elements that are enriched in the promoters of several defense-related genes. Plays an important role in the benzothiadiazole-induced disease resistance by mediating salicylic acid (SA) defense signaling pathway, independently of the disease resistance gene NPR1/NH1. Acts as a negative regulator of defense responses against the bacterial blight Xanthomonas oryzae pv oryzae (Xoo) and the bacterial streak Xanthomonas oryzae pv oryzicola (Xoc). Acts downstream of abscisic acid (ABA) signaling in response to the rice blast fungus. ABA is a negative regulator of defense responses that interacts antagonistically with salicylic acid (SA) signaling pathway. Acts as a negative regulator of ABA signaling that suppresses growth of seedlings. Does not seem to be involved in the regulation of salt stress response. Acts as a negative regulator of cold stress response. Acts as a negative regulator of drought stress response. The sequence is that of Transcription factor WRKY45-1 from Oryza sativa subsp. japonica (Rice).